A 232-amino-acid chain; its full sequence is Lipoprotein-releasing system ATP-binding protein LolD (232 aa).

Positions 11 to 232 constitute an ABC transporter domain; sequence IEVTDLQRAF…LHDGRLIEEY (222 aa). 47-54 is an ATP binding site; sequence GPSGAGKS.

Belongs to the ABC transporter superfamily. Lipoprotein translocase (TC 3.A.1.125) family. The complex is composed of two ATP-binding proteins (LolD) and two transmembrane proteins (LolC and LolE).

The protein resides in the cell inner membrane. In terms of biological role, part of the ABC transporter complex LolCDE involved in the translocation of mature outer membrane-directed lipoproteins, from the inner membrane to the periplasmic chaperone, LolA. Responsible for the formation of the LolA-lipoprotein complex in an ATP-dependent manner. This chain is Lipoprotein-releasing system ATP-binding protein LolD, found in Zymomonas mobilis subsp. mobilis (strain ATCC 31821 / ZM4 / CP4).